The following is a 287-amino-acid chain: 4,4'-diapophytoene synthase (287 aa).

Residues 18–21, Tyr-41, and Arg-45 each bind (2E,6E)-farnesyl diphosphate; that span reads HSKS. Mg(2+) contacts are provided by Asp-48 and Asp-52. A (2E,6E)-farnesyl diphosphate-binding site is contributed by Gln-165. Position 168 (Asn-168) interacts with Mg(2+). Arg-171 serves as a coordination point for (2E,6E)-farnesyl diphosphate. Asp-172 serves as a coordination point for Mg(2+). A (2E,6E)-farnesyl diphosphate-binding site is contributed by Tyr-248.

Belongs to the phytoene/squalene synthase family. CrtM subfamily. Requires Mg(2+) as cofactor.

It carries out the reaction 2 (2E,6E)-farnesyl diphosphate = 15-cis-4,4'-diapophytoene + 2 diphosphate. It participates in carotenoid biosynthesis; staphyloxanthin biosynthesis; staphyloxanthin from farnesyl diphosphate: step 1/5. In terms of biological role, involved in the biosynthesis of the yellow-orange carotenoid staphyloxanthin, which plays a role in the virulence via its protective function against oxidative stress. Catalyzes the head-to-head condensation of two molecules of farnesyl diphosphate (FPP) into the colorless C(30) carotenoid 4,4'-diapophytoene (dehydrosqualene). The protein is 4,4'-diapophytoene synthase of Staphylococcus aureus (strain NCTC 8325 / PS 47).